The following is a 401-amino-acid chain: Nicotinate phosphoribosyltransferase (401 aa).

Residue histidine 224 is modified to Phosphohistidine; by autocatalysis.

Belongs to the NAPRTase family. In terms of processing, transiently phosphorylated on a His residue during the reaction cycle. Phosphorylation strongly increases the affinity for substrates and increases the rate of nicotinate D-ribonucleotide production. Dephosphorylation regenerates the low-affinity form of the enzyme, leading to product release.

The enzyme catalyses nicotinate + 5-phospho-alpha-D-ribose 1-diphosphate + ATP + H2O = nicotinate beta-D-ribonucleotide + ADP + phosphate + diphosphate. The protein operates within cofactor biosynthesis; NAD(+) biosynthesis; nicotinate D-ribonucleotide from nicotinate: step 1/1. In terms of biological role, catalyzes the synthesis of beta-nicotinate D-ribonucleotide from nicotinate and 5-phospho-D-ribose 1-phosphate at the expense of ATP. This Pseudomonas putida (strain GB-1) protein is Nicotinate phosphoribosyltransferase.